The following is a 164-amino-acid chain: Protein SprT (164 aa).

Residues 14 to 156 (QQAETFFKRP…LCKRCRAILV (143 aa)) enclose the SprT-like domain. Residue histidine 69 coordinates Zn(2+). Glutamate 70 is a catalytic residue. Position 73 (histidine 73) interacts with Zn(2+).

The protein belongs to the SprT family. Requires Zn(2+) as cofactor.

Its subcellular location is the cytoplasm. The chain is Protein SprT from Pseudomonas putida (strain GB-1).